The chain runs to 108 residues: Nascent polypeptide-associated complex protein (108 aa).

Residues 1-68 (MNPREIRRMM…LREVKKEVEQ (68 aa)) form the NAC-A/B domain.

Belongs to the NAC-alpha family. As to quaternary structure, homodimer. Interacts with the ribosome. Binds ribosomal RNA.

Contacts the emerging nascent chain on the ribosome. The chain is Nascent polypeptide-associated complex protein from Picrophilus torridus (strain ATCC 700027 / DSM 9790 / JCM 10055 / NBRC 100828 / KAW 2/3).